We begin with the raw amino-acid sequence, 1086 residues long: Calcium-transporting ATPase 9, plasma membrane-type (1086 aa).

A compositionally biased stretch (low complexity) spans 1–15 (MSTSSSNGLLLTSMS). The segment at 1-50 (MSTSSSNGLLLTSMSGRHDDMEAGSAKTEEHSDHEELQHDPDDPFDIDNT) is disordered. Over 1 to 194 (MSTSSSNGLL…NTYPKKKGKN (194 aa)) the chain is Cytoplasmic. The segment covering 16-42 (GRHDDMEAGSAKTEEHSDHEELQHDPD) has biased composition (basic and acidic residues). The interval 57-68 (SLRRWRQAALVL) is interaction with calmodulin. Residues 195 to 215 (FFMFLWEAWQDLTLIILIIAA) traverse the membrane as a helical segment. Residues 216–233 (VTSLALGIKTEGLKEGWL) lie on the Lumenal side of the membrane. The helical transmembrane segment at 234–254 (DGGSIAFAVLLVIVVTAVSDY) threads the bilayer. The Cytoplasmic portion of the chain corresponds to 255-382 (RQSLQFQNLN…GEETPLQVRL (128 aa)). The chain crosses the membrane as a helical span at residues 383–402 (NGLATFIGIVGLSVALVVLV). The Lumenal portion of the chain corresponds to 403–439 (ALLVRYFTGTTQDTNGATQFIKGTTSISDIVDDCVKI). A helical transmembrane segment spans residues 440–457 (FTIAVTIVVVAVPEGLPL). Residues 458-857 (AVTLTLAYSM…RWGRSVYANI (400 aa)) lie on the Cytoplasmic side of the membrane. Asp495 (4-aspartylphosphate intermediate) is an active-site residue. Asp802 and Asp806 together coordinate Mg(2+). Residues 858 to 876 (QKFIQFQLTVNVAALIINV) traverse the membrane as a helical segment. Residues 877–887 (VAAMSSGDVPL) lie on the Lumenal side of the membrane. The helical transmembrane segment at 888-908 (KAVQLLWVNLIMDTLGALALA) threads the bilayer. Over 909–928 (TEPPTDHLMHRTPVGRREPL) the chain is Cytoplasmic. The helical transmembrane segment at 929–951 (ITNIMWRNLLVQSFYQVAVLLVL) threads the bilayer. Residues 952 to 963 (NFAGLSILGLNH) are Lumenal-facing. Residues 964–988 (ENHAHAVEVKNTMIFNAFVMCQIFN) traverse the membrane as a helical segment. At 989-1006 (EFNARKPDEMNVFRGVNK) the chain is on the cytoplasmic side. The chain crosses the membrane as a helical span at residues 1007–1028 (NPLFVAIVGVTFILQIIIVTFL). The Lumenal segment spans residues 1029 to 1038 (GKFAHTVRLG). A helical transmembrane segment spans residues 1039–1060 (WQLWLASIIIGLVSWPLAIVGK). Topologically, residues 1061-1086 (LIPVPKTPMSVYFKKPFRKYKASRNA) are cytoplasmic.

The protein belongs to the cation transport ATPase (P-type) (TC 3.A.3) family. Type IIB subfamily.

Its subcellular location is the membrane. It catalyses the reaction Ca(2+)(in) + ATP + H2O = Ca(2+)(out) + ADP + phosphate + H(+). With respect to regulation, activated by calmodulin. Functionally, this magnesium-dependent enzyme catalyzes the hydrolysis of ATP coupled with the translocation of calcium from the cytosol out of the cell or into organelles. This is Calcium-transporting ATPase 9, plasma membrane-type (ACA9) from Arabidopsis thaliana (Mouse-ear cress).